The sequence spans 621 residues: 1-deoxy-D-xylulose-5-phosphate synthase (621 aa).

Thiamine diphosphate-binding positions include His-80 and 121–123 (GHS). Asp-152 lines the Mg(2+) pocket. Residues 153 to 154 (GA), Asn-181, Tyr-288, and Glu-370 each bind thiamine diphosphate. Position 181 (Asn-181) interacts with Mg(2+).

It belongs to the transketolase family. DXPS subfamily. Homodimer. The cofactor is Mg(2+). Requires thiamine diphosphate as cofactor.

The catalysed reaction is D-glyceraldehyde 3-phosphate + pyruvate + H(+) = 1-deoxy-D-xylulose 5-phosphate + CO2. It participates in metabolic intermediate biosynthesis; 1-deoxy-D-xylulose 5-phosphate biosynthesis; 1-deoxy-D-xylulose 5-phosphate from D-glyceraldehyde 3-phosphate and pyruvate: step 1/1. Its function is as follows. Catalyzes the acyloin condensation reaction between C atoms 2 and 3 of pyruvate and glyceraldehyde 3-phosphate to yield 1-deoxy-D-xylulose-5-phosphate (DXP). The sequence is that of 1-deoxy-D-xylulose-5-phosphate synthase from Edwardsiella ictaluri (strain 93-146).